The sequence spans 185 residues: ATP synthase subunit delta (185 aa).

Belongs to the ATPase delta chain family. F-type ATPases have 2 components, F(1) - the catalytic core - and F(0) - the membrane proton channel. F(1) has five subunits: alpha(3), beta(3), gamma(1), delta(1), epsilon(1). CF(0) has four main subunits: a(1), b(1), b'(1) and c(10-14). The alpha and beta chains form an alternating ring which encloses part of the gamma chain. F(1) is attached to F(0) by a central stalk formed by the gamma and epsilon chains, while a peripheral stalk is formed by the delta, b and b' chains.

The protein localises to the cellular thylakoid membrane. In terms of biological role, f(1)F(0) ATP synthase produces ATP from ADP in the presence of a proton or sodium gradient. F-type ATPases consist of two structural domains, F(1) containing the extramembraneous catalytic core and F(0) containing the membrane proton channel, linked together by a central stalk and a peripheral stalk. During catalysis, ATP synthesis in the catalytic domain of F(1) is coupled via a rotary mechanism of the central stalk subunits to proton translocation. This protein is part of the stalk that links CF(0) to CF(1). It either transmits conformational changes from CF(0) to CF(1) or is implicated in proton conduction. This chain is ATP synthase subunit delta, found in Crocosphaera subtropica (strain ATCC 51142 / BH68) (Cyanothece sp. (strain ATCC 51142)).